Consider the following 157-residue polypeptide: Endoribonuclease YbeY (157 aa).

Zn(2+)-binding residues include His113, His117, and His123.

Belongs to the endoribonuclease YbeY family. It depends on Zn(2+) as a cofactor.

The protein resides in the cytoplasm. In terms of biological role, single strand-specific metallo-endoribonuclease involved in late-stage 70S ribosome quality control and in maturation of the 3' terminus of the 16S rRNA. The sequence is that of Endoribonuclease YbeY from Ehrlichia ruminantium (strain Welgevonden).